A 733-amino-acid chain; its full sequence is DNA repair and recombination protein RAD54-like (733 aa).

A disordered region spans residues 1 to 35 (LAKRKAGGEEEDGEWRPPATQKRQKAGSEAESADC). The 176-residue stretch at 159 to 334 (SRRIPGSHGC…FSLVHFVNSG (176 aa)) folds into the Helicase ATP-binding domain. ATP is bound at residue 172–179 (DEMGLGKT). Positions 285 to 288 (DEGH) match the DEGH box motif. The Helicase C-terminal domain maps to 488 to 642 (LVLDYILAVT…CVVDEEQDVE (155 aa)). An N6-acetyllysine modification is found at K504. S561 carries the phosphoserine; by NEK1 modification.

The protein belongs to the SNF2/RAD54 helicase family. In terms of assembly, homohexamer. Interacts (via N-terminus) with RAD51. Interacts with NAP1L1. Interacts with BRD9; this interaction orchestrates RAD51-RAD54 complex formation. Acetylated. Acetylation promotes interaction with BRD9, and subsequently with RAD54, which is essential for homologous recombination (HR). In terms of processing, phosphorylated. Phosphorylation at Ser-561 by NEK1 specifically in G2 phase allows efficient removal of RAD51 filaments from DNA. As to expression, highly expressed in bursa, thymus, testis, and ovary. Low level of expression seen in all other organs tested.

The protein localises to the nucleus. Functionally, plays an essential role in homologous recombination (HR) which is a major pathway for repairing DNA double-strand breaks (DSBs), single-stranded DNA (ssDNA) gaps, and stalled or collapsed replication forks. Acts as a molecular motor during the homology search and guides RAD51 ssDNA along a donor dsDNA thereby changing the homology search from the diffusion-based mechanism to a motor-guided mechanism. Plays also an essential role in RAD51-mediated synaptic complex formation which consists of three strands encased in a protein filament formed once homology is recognized. Once DNA strand exchange occured, dissociates RAD51 from nucleoprotein filaments formed on dsDNA. The sequence is that of DNA repair and recombination protein RAD54-like (RAD54L) from Gallus gallus (Chicken).